Here is a 112-residue protein sequence, read N- to C-terminus: Small ribosomal subunit protein bS6 (112 aa).

It belongs to the bacterial ribosomal protein bS6 family.

Binds together with bS18 to 16S ribosomal RNA. The polypeptide is Small ribosomal subunit protein bS6 (Chlamydia caviae (strain ATCC VR-813 / DSM 19441 / 03DC25 / GPIC) (Chlamydophila caviae)).